The following is a 231-amino-acid chain: Ribosomal RNA large subunit methyltransferase E (231 aa).

Residues G76, W78, D99, D115, and D139 each coordinate S-adenosyl-L-methionine. Catalysis depends on K179, which acts as the Proton acceptor.

It belongs to the class I-like SAM-binding methyltransferase superfamily. RNA methyltransferase RlmE family.

The protein resides in the cytoplasm. The enzyme catalyses uridine(2552) in 23S rRNA + S-adenosyl-L-methionine = 2'-O-methyluridine(2552) in 23S rRNA + S-adenosyl-L-homocysteine + H(+). Its function is as follows. Specifically methylates the uridine in position 2552 of 23S rRNA at the 2'-O position of the ribose in the fully assembled 50S ribosomal subunit. This is Ribosomal RNA large subunit methyltransferase E from Bradyrhizobium sp. (strain ORS 278).